Here is a 660-residue protein sequence, read N- to C-terminus: UvrABC system protein B (660 aa).

Positions 26–196 constitute a Helicase ATP-binding domain; it reads DGIDEKKEHQ…ELNKGQFDVK (171 aa). 39-46 contacts ATP; that stretch reads GVTGSGKT. The Beta-hairpin motif lies at 92–115; the sequence is YFDFYKPEAYIPKSDLYIEKTSKN. The 163-residue stretch at 431-593 folds into the Helicase C-terminal domain; that stretch reads QIEDIYDHLK…IIPKTIVKPI (163 aa). In terms of domain architecture, UVR spans 622–657; it reads KKFIDQMVRKMTQLAKANKFEEAIEIRDYLIEIGIE.

The protein belongs to the UvrB family. Forms a heterotetramer with UvrA during the search for lesions. Interacts with UvrC in an incision complex.

The protein resides in the cytoplasm. In terms of biological role, the UvrABC repair system catalyzes the recognition and processing of DNA lesions. A damage recognition complex composed of 2 UvrA and 2 UvrB subunits scans DNA for abnormalities. Upon binding of the UvrA(2)B(2) complex to a putative damaged site, the DNA wraps around one UvrB monomer. DNA wrap is dependent on ATP binding by UvrB and probably causes local melting of the DNA helix, facilitating insertion of UvrB beta-hairpin between the DNA strands. Then UvrB probes one DNA strand for the presence of a lesion. If a lesion is found the UvrA subunits dissociate and the UvrB-DNA preincision complex is formed. This complex is subsequently bound by UvrC and the second UvrB is released. If no lesion is found, the DNA wraps around the other UvrB subunit that will check the other stand for damage. The polypeptide is UvrABC system protein B (Metamycoplasma arthritidis (strain 158L3-1) (Mycoplasma arthritidis)).